The sequence spans 352 residues: Dihydroorotate dehydrogenase (quinone) (352 aa).

FMN-binding positions include 68 to 72 (AGFDK) and T92. K72 lines the substrate pocket. 117-121 (NAMGF) contributes to the substrate binding site. N146 and N179 together coordinate FMN. N179 is a binding site for substrate. S182 serves as the catalytic Nucleophile. N184 contacts substrate. The FMN site is built by K215 and T243. Position 244–245 (244–245 (NT)) interacts with substrate. FMN is bound by residues G263, G292, and 313–314 (YS).

It belongs to the dihydroorotate dehydrogenase family. Type 2 subfamily. Monomer. FMN serves as cofactor.

The protein localises to the cell membrane. The catalysed reaction is (S)-dihydroorotate + a quinone = orotate + a quinol. It participates in pyrimidine metabolism; UMP biosynthesis via de novo pathway; orotate from (S)-dihydroorotate (quinone route): step 1/1. Functionally, catalyzes the conversion of dihydroorotate to orotate with quinone as electron acceptor. The polypeptide is Dihydroorotate dehydrogenase (quinone) (Sulfurimonas denitrificans (strain ATCC 33889 / DSM 1251) (Thiomicrospira denitrificans (strain ATCC 33889 / DSM 1251))).